Here is a 122-residue protein sequence, read N- to C-terminus: Large ribosomal subunit protein uL14 (122 aa).

It belongs to the universal ribosomal protein uL14 family. Part of the 50S ribosomal subunit. Forms a cluster with proteins L3 and L19. In the 70S ribosome, L14 and L19 interact and together make contacts with the 16S rRNA in bridges B5 and B8.

Binds to 23S rRNA. Forms part of two intersubunit bridges in the 70S ribosome. The polypeptide is Large ribosomal subunit protein uL14 (Paracoccus denitrificans (strain Pd 1222)).